A 221-amino-acid polypeptide reads, in one-letter code: Beta-phosphoglucomutase (221 aa).

Asp-8 functions as the Nucleophile in the catalytic mechanism. Mg(2+)-binding residues include Asp-8 and Asp-10. Asp-8 is modified (4-aspartylphosphate). The active-site Proton donor/acceptor is Asp-10. Residues Asp-10, Gly-46, Val-47, Arg-49, Ser-116, Lys-117, and Asn-118 each contribute to the beta-D-glucose 6-phosphate site. Asp-170 lines the Mg(2+) pocket.

The protein belongs to the HAD-like hydrolase superfamily. CbbY/CbbZ/Gph/YieH family. In terms of assembly, monomer. Mg(2+) serves as cofactor. Autophosphorylated.

It localises to the cytoplasm. It catalyses the reaction beta-D-glucose 1-phosphate = beta-D-glucose 6-phosphate. Activated by phosphorylation. Competitively inhibited by alpha-D-galactose-1-phosphate. Its function is as follows. Catalyzes the interconversion of D-glucose 1-phosphate (G1P) and D-glucose 6-phosphate (G6P), forming beta-D-glucose 1,6-(bis)phosphate (beta-G16P) as an intermediate. The beta-phosphoglucomutase (Beta-PGM) acts on the beta-C(1) anomer of G1P. Glucose or lactose are used in preference to maltose, which is only utilized after glucose or lactose has been exhausted. It plays a key role in the regulation of the flow of carbohydrate intermediates in glycolysis and the formation of the sugar nucleotide UDP-glucose. This chain is Beta-phosphoglucomutase, found in Lactococcus lactis subsp. lactis (strain IL1403) (Streptococcus lactis).